The primary structure comprises 254 residues: D-aminoacyl-tRNA deacylase (254 aa).

Residues 61–83 (KPTLTVHTPGNLTEDNSHGGNPE) form a disordered region. The span at 65–74 (TVHTPGNLTE) shows a compositional bias: polar residues.

Belongs to the DtdA deacylase family. Monomer. Requires Zn(2+) as cofactor.

The enzyme catalyses a D-aminoacyl-tRNA + H2O = a tRNA + a D-alpha-amino acid + H(+). It catalyses the reaction glycyl-tRNA(Ala) + H2O = tRNA(Ala) + glycine + H(+). D-aminoacyl-tRNA deacylase with broad substrate specificity. By recycling D-aminoacyl-tRNA to D-amino acids and free tRNA molecules, this enzyme counteracts the toxicity associated with the formation of D-aminoacyl-tRNA entities in vivo. This is D-aminoacyl-tRNA deacylase from Methanococcus maripaludis (strain C7 / ATCC BAA-1331).